A 132-amino-acid chain; its full sequence is Ribosome-binding factor A (132 aa).

It belongs to the RbfA family. In terms of assembly, monomer. Binds 30S ribosomal subunits, but not 50S ribosomal subunits or 70S ribosomes.

It is found in the cytoplasm. In terms of biological role, one of several proteins that assist in the late maturation steps of the functional core of the 30S ribosomal subunit. Associates with free 30S ribosomal subunits (but not with 30S subunits that are part of 70S ribosomes or polysomes). Required for efficient processing of 16S rRNA. May interact with the 5'-terminal helix region of 16S rRNA. The sequence is that of Ribosome-binding factor A from Pseudomonas putida (strain GB-1).